Consider the following 449-residue polypeptide: UDP-N-acetylmuramoylalanine--D-glutamate ligase (449 aa).

Residue 116 to 122 (GSNGKST) participates in ATP binding.

The protein belongs to the MurCDEF family.

It is found in the cytoplasm. It catalyses the reaction UDP-N-acetyl-alpha-D-muramoyl-L-alanine + D-glutamate + ATP = UDP-N-acetyl-alpha-D-muramoyl-L-alanyl-D-glutamate + ADP + phosphate + H(+). Its pathway is cell wall biogenesis; peptidoglycan biosynthesis. Functionally, cell wall formation. Catalyzes the addition of glutamate to the nucleotide precursor UDP-N-acetylmuramoyl-L-alanine (UMA). The protein is UDP-N-acetylmuramoylalanine--D-glutamate ligase of Shewanella violacea (strain JCM 10179 / CIP 106290 / LMG 19151 / DSS12).